A 131-amino-acid chain; its full sequence is Sec-independent protein translocase protein TatB (131 aa).

The helical transmembrane segment at 1–21 (MFDISFAELVVVGIVALIVIG) threads the bilayer. 2 stretches are compositionally biased toward polar residues: residues 71 to 93 (NSFENSVRSEINKIQETTETQSA) and 111 to 131 (PVNTSETKTSSAPAEPRQPNS). Positions 71–131 (NSFENSVRSE…APAEPRQPNS (61 aa)) are disordered.

Belongs to the TatB family. In terms of assembly, the Tat system comprises two distinct complexes: a TatABC complex, containing multiple copies of TatA, TatB and TatC subunits, and a separate TatA complex, containing only TatA subunits. Substrates initially bind to the TatABC complex, which probably triggers association of the separate TatA complex to form the active translocon.

Its subcellular location is the cell inner membrane. Functionally, part of the twin-arginine translocation (Tat) system that transports large folded proteins containing a characteristic twin-arginine motif in their signal peptide across membranes. Together with TatC, TatB is part of a receptor directly interacting with Tat signal peptides. TatB may form an oligomeric binding site that transiently accommodates folded Tat precursor proteins before their translocation. The sequence is that of Sec-independent protein translocase protein TatB from Nitrosomonas europaea (strain ATCC 19718 / CIP 103999 / KCTC 2705 / NBRC 14298).